The sequence spans 2443 residues: MAAEEGVASAASAGGSWGTAAMGRVLPMLLVPVPAEAMGQLGSRAQLRTQPEALGSLTAAGSLQVLSLTPGSRGGGRCCLEGPFWHFLWEDSRNSSTPTEKPKLLALGENYELLIYEFNLKDGRCDATILYSCSREALQKLIDDQDISISLLSLRILSFHNNTSLLFINKCVILHIIFPERDAAIRVLNCFTLPLPAQAVDMIIDTQLCRGILFVLSSLGWIYIFDVVDGTYVAHVDLALHKEDMCNEQQQEPAKISSFTSLKVSQDLDVAVIVSSSNSAVALNLNLYFRQHPGHLLCERILEDLPIQGPKGVDEDDPVNSAYNMKLAKFSFQIDRSWKAQLSSLNETIKNSKLEVSCCAPWFQDILHLESPESGNHSTSVQSWAFIPQDIMHGQYNVLQKDHAKTSDPGRSWKIMHISEQEEPIELKCVSVTGFTALFTWEVERMGYTITLWDLETQGMQCFSLGTKCIPVDSSGDQQLCFVLTENGLSLILFGLTQEEFLNRLMIHGSASTVDTLCHLNGWGRCSIPIHALEAGIENRQLDTVNFFLKSKENLFNPSSKSSVSDQFDHLSSHLYLRNVEELIPALDLLCSAIRESYSEPQSKHFSEQLLNLTLSFLNNQIKELFIHTEELDEHLQKGVNILTSYINELRTFMIKFPWKLTDAIDEYDVHENVPKVKESNIWKKLSFEEVIASAILNNKIPEAQTFFRIDSHSAQKLEELIGIGLNLVFDNLKKNNIKEASELLKNMGFDVKGQLLKICFYTTNKNIRDFLVEILKEKNYFSEKEKRTIDFVHQVEKLYLGHFQENMQIQSFPRYWIKEQDFFKHKSVLDSFLKYDCKDEFNKQDHRIVLNWALWWDQLTQESILLPRISPEEYKSYSPEALWRYLTARHDWLNIILWIGEFQTQHSYASLQQNKWPLLTVDVINQNTSCNNYMRNEILDKLARNGVFLASELEDFECFLLRLSRIGGVIQDTLPVQNYKTKEGWDFHSQFILYCLEHSLQHLLYVYLDCYKLSPENCPFLEKKELHEAHPWFEFLVQCRQVASNLTDPKLIFQASLANAQILIPTNQASVSSMLLEGHTLLALATTMYSPGGVSQVVQNEENENCLKKVDPQLLKMALTPYPKLKTALFPQCTPPSVLPSDITIYHLIQSLSPFDPSRLFGWQSANTLAIGDAWSHLPHFSSPDLVNKYAIVERLNFAYYLHNGRPSFAFGTFLVQELIKSKTPKQLIQQVGNEAYVIGLSSFHIPSIGAACVCFLELLGLDSLKLRVDMKVANIILSYKCRNEDAQYSFIRESVAEKLSKLADGEKTTTEELLVLLEEGTWNSIQQQEIKRLSSESSSQWALVVQFCRLHNMKLSISYLRECAKANDWLQFIIHSQLHNYHPAEVKSLIQYFSPVIQDHLRLAFENLPSVPTSKMDSDQVCNKCPQELQGSKQEMTDLFEILLQCSEEPDSWHWLLVEAVKQQAPILSVLASCLQGASAISCLCVWIITSVEDNVATEAMGHIQDSTEDHTWNLEDLSVIWRTLLTRQKSKTLIRGFQLFFKDSPLLLVMEMYELCMFFRNYKEAEAKLLEFQKSLETLNTAATKVHPVIPAMWLEDQVCFLLKLMLQQCKTQYELGKLLQLFVEREHLFSDGPDVKKLCILCQILKDTSIAINHTIITSYSIENLQHECRSILERLQTDGQFALARRVAELAELPVDNLVIKEITQEMQTLKHIEQWSLKQARIDFWKKCHENFKKNSISSKAASSFFSTQAHVACEHPTGWSSMEERHLLLTLAGHWLAQEDVVPLDKLEELEKQIWLCRITQHTLGRNQEETEPRFSRQISTSGELSFDSLASEFSFSKLAALNTSKYLELNSLPSKETCENRLDWKEQESLNFLIGRLLDDGCVHEASRVCRYFHFYNPDVALVLHCRALASGEASMEDLHPEIHALLQSAELLEEEAPDIPLRRVHSTSSLDSQKFVTVPSSNEVVTNLEVLTSKCLHGKNYCRQVLCLYDLAKELGCSYTDVAAQDGEAMLRKILASQQPDRCKRAQAFISTQGLKPDTVAELVAEEVTRELLTSSQGTGHKQMFNPTEESQTFLQLTTLCQDRTLVGMKLLDKISSVPHGELSCTTELLILAHHCFTLTCHMEGIIRVLQAAHMLTDNHLAPSEEYGLVVRLLTGIGRYNEMTYIFDLLHKKHYFEVLMRKKLDPSGTLKTALLDYIKRCRPGDSEKHNMIALCFSMCREIGENHEAAARIQLKLIESQPWEDSLKDGHQLKQLLLKALTLMLDAAESYAKDSCVRQAQHCQRLTKLITLQIHFLNTGQNTMLINLGRHKLMDCILALPRFYQASIVAEAYDFVPDWAEILYQQVILKGDFNYLEEFKQQRLLKSSIFEEISKKYKQHQPTDMVMENLKKLLTYCEDVYLYYKLAYEHKFYEIVNVLLKDPQTGCCLKDMLAG.

Ser-1955 carries the phosphoserine modification.

In terms of assembly, interacts with AP5Z1, AP5B1, AP5S1 and ZFYVE26. Expressed in all structures of brain, with a high expression in cerebellum. Expressed in cortical projection neurons.

It is found in the cytoplasm. The protein localises to the cytosol. It localises to the nucleus. Its subcellular location is the cell projection. The protein resides in the axon. It is found in the dendrite. Functionally, may play a role in neurite plasticity by maintaining cytoskeleton stability and regulating synaptic vesicle transport. This is Spatacsin (SPG11) from Homo sapiens (Human).